Reading from the N-terminus, the 186-residue chain is MGVREQLERVAAYFGFGVDDDYYEDEEEEERYAKGSYGNGGRTGEPSPAVRRLGRSERSSAFGTSLGDLFGSEGPERGRYAHNPPHLRAVPDQRPTRVSVVEPSSFNDAQALADRFKRQQPVILNLQNVNSDLSRRMVDFCAGLTYALDGHIQTVANRVFLLTPRDVEVSAEERKMLAERAFFNQL.

A disordered region spans residues Glu24–Pro91.

Belongs to the SepF family. In terms of assembly, homodimer. Interacts with FtsZ.

The protein localises to the cytoplasm. In terms of biological role, cell division protein that is part of the divisome complex and is recruited early to the Z-ring. Probably stimulates Z-ring formation, perhaps through the cross-linking of FtsZ protofilaments. Its function overlaps with FtsA. The chain is Cell division protein SepF from Rubrobacter xylanophilus (strain DSM 9941 / JCM 11954 / NBRC 16129 / PRD-1).